The chain runs to 613 residues: Probable potassium transport system protein Kup (613 aa).

A run of 11 helical transmembrane segments spans residues 38–58 (VLGVLSLLIWALLLIVTLKYL), 91–111 (WILVSLGLFGAALLYGDGMIT), 128–148 (PSFGPLVIPVTIAILAGLFLF), 159–179 (FFGPIILLWFTSIGLCGLVEI), 206–226 (FLVLGAVFLAVTGAEALYADM), 238–258 (WSLLVLPALLLNYFGQGAVLL), 270–290 (ALVPSWGIIPMVILATLATII), 328–348 (IYVPAANWALMFSTIALVAGF), 357–377 (AYGVAVTATMLISAVLFYYVA), 387–407 (GLNLLMGMFMLIDLSFFGASV), and 410–430 (LFHGAWFPLVIGFALFTLMLT).

The protein belongs to the HAK/KUP transporter (TC 2.A.72) family.

It is found in the cell inner membrane. It carries out the reaction K(+)(in) + H(+)(in) = K(+)(out) + H(+)(out). Functionally, transport of potassium into the cell. Likely operates as a K(+):H(+) symporter. This is Probable potassium transport system protein Kup from Chlorobaculum tepidum (strain ATCC 49652 / DSM 12025 / NBRC 103806 / TLS) (Chlorobium tepidum).